A 251-amino-acid polypeptide reads, in one-letter code: uncharacterized protein (251 aa).

This sequence belongs to the FAM243 family.

This is an uncharacterized protein from Bos taurus (Bovine).